A 125-amino-acid chain; its full sequence is Secreted RxLR effector protein 22 (125 aa).

Positions 1–26 are cleaved as a signal peptide; sequence MRLIYSALVTAAAMVAISNGSTPARG. Positions 21-66 are disordered; it reads STPARGNEVETRSLRGGNEVDSSMSDDGERAARGGGRVRSQASGVT. Positions 32–50 match the RxLR-dEER motif; it reads RSLRGGNEVDSSMSDDGER.

This sequence belongs to the RxLR effector family.

It localises to the secreted. The protein resides in the host nucleus. Functionally, effector that acts as a broad suppressor of cell death to interrupt plant immunity. Inhibits cell death induced by cell death-inducing proteins, including the PAMP elicitor INF1 from P.infestans. This is Secreted RxLR effector protein 22 from Plasmopara viticola (Downy mildew of grapevine).